Here is a 364-residue protein sequence, read N- to C-terminus: DNA polymerase IV (364 aa).

A UmuC domain is found at 14–198 (IIHIDMDAFF…LPVEKFHGVG (185 aa)). Positions 18 and 116 each coordinate Mg(2+). E117 is an active-site residue.

It belongs to the DNA polymerase type-Y family. Monomer. Requires Mg(2+) as cofactor.

Its subcellular location is the cytoplasm. It carries out the reaction DNA(n) + a 2'-deoxyribonucleoside 5'-triphosphate = DNA(n+1) + diphosphate. Its function is as follows. Poorly processive, error-prone DNA polymerase involved in untargeted mutagenesis. Copies undamaged DNA at stalled replication forks, which arise in vivo from mismatched or misaligned primer ends. These misaligned primers can be extended by PolIV. Exhibits no 3'-5' exonuclease (proofreading) activity. May be involved in translesional synthesis, in conjunction with the beta clamp from PolIII. The sequence is that of DNA polymerase IV from Lactococcus lactis subsp. cremoris (strain SK11).